The sequence spans 205 residues: ATP phosphoribosyltransferase (205 aa).

It belongs to the ATP phosphoribosyltransferase family. Short subfamily. As to quaternary structure, heteromultimer composed of HisG and HisZ subunits.

It localises to the cytoplasm. It catalyses the reaction 1-(5-phospho-beta-D-ribosyl)-ATP + diphosphate = 5-phospho-alpha-D-ribose 1-diphosphate + ATP. It participates in amino-acid biosynthesis; L-histidine biosynthesis; L-histidine from 5-phospho-alpha-D-ribose 1-diphosphate: step 1/9. Functionally, catalyzes the condensation of ATP and 5-phosphoribose 1-diphosphate to form N'-(5'-phosphoribosyl)-ATP (PR-ATP). Has a crucial role in the pathway because the rate of histidine biosynthesis seems to be controlled primarily by regulation of HisG enzymatic activity. The chain is ATP phosphoribosyltransferase from Leptospira interrogans serogroup Icterohaemorrhagiae serovar Lai (strain 56601).